The following is a 314-amino-acid chain: Lysophospholipase D GDPD1 (314 aa).

At 1–3 (MSS) the chain is on the extracellular side. A helical transmembrane segment spans residues 4 to 24 (TAAFCLLSTLGGYLVTSFLLL). The Cytoplasmic segment spans residues 25–195 (KYPALLHQRK…VDKCYKENSD (171 aa)). A GP-PDE domain is found at 40–309 (SRHISHRGGA…DYPTKLKDFL (270 aa)). Residues E72, D74, and H87 each contribute to the a divalent metal cation site. The chain crosses the membrane as a helical span at residues 196–216 (IPILFSLQRVLLILGLFFTGL). At 217-314 (LPFVPIREQF…LKDFLNNFSA (98 aa)) the chain is on the extracellular side.

The protein belongs to the glycerophosphoryl diester phosphodiesterase family. As to expression, widely expressed.

It is found in the cytoplasm. It localises to the membrane. The protein resides in the perinuclear region. The protein localises to the endoplasmic reticulum. It catalyses the reaction 1-hexadecanoyl-sn-glycero-3-phosphocholine + H2O = 1-hexadecanoyl-sn-glycero-3-phosphate + choline + H(+). The catalysed reaction is 1-hexadecanoyl-sn-glycero-3-phosphoethanolamine + H2O = 1-hexadecanoyl-sn-glycero-3-phosphate + ethanolamine + H(+). It carries out the reaction N-hexadecanoyl-sn-glycero-3-phosphoethanolamine + H2O = N-hexadecanoylethanolamine + sn-glycerol 3-phosphate + H(+). The enzyme catalyses N-(5Z,8Z,11Z,14Z-eicosatetraenoyl)-1-(9Z-octadecenoyl)-sn-glycero-3-phosphoethanolamine + H2O = N-(5Z,8Z,11Z,14Z-eicosatetraenoyl)-ethanolamine + 1-(9Z-octadecenoyl)-sn-glycero-3-phosphate + H(+). It catalyses the reaction N,1-di-(9Z-octadecenoyl)-sn-glycero-3-phosphoethanolamine + H2O = N-(9Z-octadecenoyl) ethanolamine + 1-(9Z-octadecenoyl)-sn-glycero-3-phosphate + H(+). The catalysed reaction is N-hexadecanoyl-1-(9Z-octadecenoyl)-sn-glycero-3-phosphoethanolamine + H2O = N-hexadecanoylethanolamine + 1-(9Z-octadecenoyl)-sn-glycero-3-phosphate + H(+). It carries out the reaction a 1-O-alkyl-sn-glycero-3-phosphocholine + H2O = a 1-O-alkyl-sn-glycero-3-phosphate + choline + H(+). The enzyme catalyses 1-O-hexadecyl-sn-glycero-3-phosphocholine + H2O = 1-O-hexadecyl-sn-glycero-3-phosphate + choline + H(+). It catalyses the reaction 1-(9Z-octadecenoyl)-sn-glycero-3-phosphocholine + H2O = 1-(9Z-octadecenoyl)-sn-glycero-3-phosphate + choline + H(+). The catalysed reaction is N,1-dihexadecanoyl-sn-glycero-3-phosphoethanolamine + H2O = N-hexadecanoylethanolamine + 1-hexadecanoyl-sn-glycero-3-phosphate + H(+). It carries out the reaction 1-O-(1Z-octadecenyl)-sn-glycero-3-phospho-(N-5Z,8Z,11Z,14Z-eicosatetraenoyl)-ethanolamine + H2O = 1-O-(1Z-octadecenyl)-sn-glycero-3-phosphate + N-(5Z,8Z,11Z,14Z-eicosatetraenoyl)-ethanolamine + H(+). The enzyme catalyses 1-O-(1Z-octadecenyl)-sn-glycero-3-phospho-(N-9Z-octadecenoyl)-ethanolamine + H2O = 1-O-(1Z-octadecenyl)-sn-glycero-3-phosphate + N-(9Z-octadecenoyl) ethanolamine + H(+). It catalyses the reaction 1-O-(1Z-octadecenyl)-sn-glycero-3-phospho-N-hexadecanoyl-ethanolamine + H2O = 1-O-(1Z-octadecenyl)-sn-glycero-3-phosphate + N-hexadecanoylethanolamine + H(+). Lysophospholipase D activity is increased by magnesium and manganese and inhibited by calcium in a concentration dependent manner. Loss of lysophospholipase D activity by addition of EDTA. In terms of biological role, hydrolyzes lysoglycerophospholipids to produce lysophosphatidic acid (LPA) and the corresponding amines. Shows a preference for 1-O-alkyl-sn-glycero-3-phosphocholine (lyso-PAF), lysophosphatidylethanolamine (lyso-PE) and lysophosphatidylcholine (lyso-PC). May be involved in bioactive N-acylethanolamine biosynthesis from both N-acyl-lysoplasmenylethanolamin (N-acyl-lysoPlsEt) and N-acyl-lysophosphatidylethanolamin (N-acyl-lysoPE). In addition, hydrolyzes glycerophospho-N-acylethanolamine to N-acylethanolamine. Does not display glycerophosphodiester phosphodiesterase activity, since it cannot hydrolyze either glycerophosphoinositol or glycerophosphocholine. The protein is Lysophospholipase D GDPD1 of Mus musculus (Mouse).